The primary structure comprises 466 residues: Alpha-1A adrenergic receptor (466 aa).

The Extracellular portion of the chain corresponds to 1-25 (MVFLSGNASDSSNCTHPPAPVNISK). N-linked (GlcNAc...) asparagine glycans are attached at residues Asn-7, Asn-13, and Asn-22. A helical membrane pass occupies residues 26-51 (AILLGVILGGLILFGVLGNILVILSV). At 52 to 63 (ACHRHLHSVTHY) the chain is on the cytoplasmic side. A helical transmembrane segment spans residues 64–89 (YIVNLAVADLLLTSTVLPFSAIFEIL). At 90–99 (GYWAFGRVFC) the chain is on the extracellular side. The helical transmembrane segment at 100 to 122 (NIWAAVDVLCCTASIISLCVISI) threads the bilayer. The Cytoplasmic segment spans residues 123–143 (DRYIGVSYPLRYPTIVTQRRG). A helical membrane pass occupies residues 144-168 (LRALLCVWAFSLVISVGPLFGWRQP). The Extracellular portion of the chain corresponds to 169-181 (APDDETICQINEE). Residues 182–205 (PGYVLFSALGSFYVPLTIILAMYC) form a helical membrane-spanning segment. At 206–272 (RVYVVAKRES…KFSREKKAAK (67 aa)) the chain is on the cytoplasmic side. The helical transmembrane segment at 273–297 (TLGIVVGCFVLCWLPFFLVMPIGSF) threads the bilayer. Over 298-304 (FPDFKPP) the chain is Extracellular. The chain crosses the membrane as a helical span at residues 305 to 329 (ETVFKIVFWLGYLNSCINPIIYPCS). The Cytoplasmic portion of the chain corresponds to 330 to 466 (SQEFKKAFQN…ISLSENGEEV (137 aa)). The Nuclear localization signal motif lies at 334–349 (KKAFQNVLKIQCLRRK). The S-palmitoyl cysteine moiety is linked to residue Cys-345.

This sequence belongs to the G-protein coupled receptor 1 family. Adrenergic receptor subfamily. ADRA1A sub-subfamily. In terms of assembly, homo- and heterooligomer. Heterooligomerizes with ADRA1B homooligomers in cardiac myocytes. Interacts with CAVIN4. Abundant in liver, vas deferens, brain, and aorta, but not in heart.

The protein localises to the nucleus membrane. It is found in the cell membrane. It localises to the cytoplasm. The protein resides in the membrane. Its subcellular location is the caveola. This alpha-adrenergic receptor mediates its action by association with G proteins that activate a phosphatidylinositol-calcium second messenger system. Its effect is mediated by G(q) and G(11) proteins. Nuclear ADRA1A-ADRA1B heterooligomers regulate phenylephrine (PE)-stimulated ERK signaling in cardiac myocytes. This chain is Alpha-1A adrenergic receptor (ADRA1A), found in Oryctolagus cuniculus (Rabbit).